The sequence spans 439 residues: Ribosomal protein uS12 methylthiotransferase RimO (439 aa).

The MTTase N-terminal domain maps to 3–113 (HKVGFVSLGC…VVNAVHQHLP (111 aa)). [4Fe-4S] cluster contacts are provided by cysteine 12, cysteine 48, cysteine 77, cysteine 144, cysteine 148, and cysteine 151. In terms of domain architecture, Radical SAM core spans 130–367 (LTPRHYAYLK…MQVQAEISRN (238 aa)). Positions 370-436 (KNKIGSTQTV…DYDLYGDLEY (67 aa)) constitute a TRAM domain.

The protein belongs to the methylthiotransferase family. RimO subfamily. The cofactor is [4Fe-4S] cluster.

It localises to the cytoplasm. The catalysed reaction is L-aspartate(89)-[ribosomal protein uS12]-hydrogen + (sulfur carrier)-SH + AH2 + 2 S-adenosyl-L-methionine = 3-methylsulfanyl-L-aspartate(89)-[ribosomal protein uS12]-hydrogen + (sulfur carrier)-H + 5'-deoxyadenosine + L-methionine + A + S-adenosyl-L-homocysteine + 2 H(+). Functionally, catalyzes the methylthiolation of an aspartic acid residue of ribosomal protein uS12. This chain is Ribosomal protein uS12 methylthiotransferase RimO, found in Legionella pneumophila (strain Paris).